The chain runs to 415 residues: Tyrosine--tRNA ligase (415 aa).

The short motif at 54–63 (PTGTDIHIGH) is the 'HIGH' region element. The short motif at 248 to 252 (KMSKS) is the 'KMSKS' region element. Residue lysine 251 coordinates ATP. An S4 RNA-binding domain is found at 351-415 (AKAFYLFSKM…GKKKFLRVST (65 aa)).

The protein belongs to the class-I aminoacyl-tRNA synthetase family. TyrS type 2 subfamily. In terms of assembly, homodimer.

Its subcellular location is the cytoplasm. It carries out the reaction tRNA(Tyr) + L-tyrosine + ATP = L-tyrosyl-tRNA(Tyr) + AMP + diphosphate + H(+). Functionally, catalyzes the attachment of tyrosine to tRNA(Tyr) in a two-step reaction: tyrosine is first activated by ATP to form Tyr-AMP and then transferred to the acceptor end of tRNA(Tyr). This chain is Tyrosine--tRNA ligase, found in Prochlorococcus marinus (strain NATL2A).